The following is a 955-amino-acid chain: Structure-specific endonuclease subunit SLX4 (955 aa).

Disordered regions lie at residues 75–173 (QAEQ…RTTS), 189–231 (PVTT…TVSR), 352–376 (GPSN…KKPR), 539–608 (EMQK…PTKI), 621–648 (PIVA…PPPR), 705–784 (AAGQ…ASPD), and 819–846 (LDSD…EKDS). Basic residues predominate over residues 123–137 (RKARKTANGVTKKKR). The segment covering 150 to 159 (NEITTPTKNQ) has biased composition (polar residues). A compositionally biased stretch (low complexity) spans 189 to 198 (PVTTSTTDLT). Over residues 209–225 (TKSRVRKTSSAASRKKK) the composition is skewed to basic residues. Polar residues predominate over residues 352–362 (GPSNDSKIPNQ). Positions 539–551 (EMQKSPSRSEPKG) are enriched in basic and acidic residues. Over residues 579–601 (SANSAEHTLKTQASKSTHFASTT) the composition is skewed to polar residues. Low complexity-rich tracts occupy residues 705–720 (AAGQ…RTSA) and 727–737 (KTSTAAAAAKS). 2 stretches are compositionally biased toward basic residues: residues 738 to 748 (PTKRPVGRPRK) and 767 to 776 (KRPRGRPKKN). Low complexity predominate over residues 828 to 841 (SPSPSLSPEPVFSS).

It belongs to the SLX4 family. As to quaternary structure, forms a heterodimer with SLX1. Post-translationally, phosphorylated in response to DNA damage.

It localises to the nucleus. Regulatory subunit of the SLX1-SLX4 structure-specific endonuclease that resolves DNA secondary structures generated during DNA repair and recombination. Has endonuclease activity towards branched DNA substrates, introducing single-strand cuts in duplex DNA close to junctions with ss-DNA. The protein is Structure-specific endonuclease subunit SLX4 of Pyricularia oryzae (strain 70-15 / ATCC MYA-4617 / FGSC 8958) (Rice blast fungus).